The following is a 166-amino-acid chain: Ribosome maturation factor RimP (166 aa).

It belongs to the RimP family.

Its subcellular location is the cytoplasm. In terms of biological role, required for maturation of 30S ribosomal subunits. This chain is Ribosome maturation factor RimP, found in Psychrobacter arcticus (strain DSM 17307 / VKM B-2377 / 273-4).